A 559-amino-acid chain; its full sequence is Actin-binding protein WASF1 (559 aa).

Disordered stretches follow at residues 170-202 (EDKR…DRRR), 304-383 (IENR…GVLH), and 412-490 (VHPL…HPST). Over residues 182–202 (KNLDRPHEPEKVPRAPHDRRR) the composition is skewed to basic and acidic residues. A compositionally biased stretch (polar residues) spans 304-313 (IENRPQSPAT). Residues 322 to 332 (PTPPPPPPPLP) are compositionally biased toward pro residues. A compositionally biased stretch (low complexity) spans 333–346 (SALSTSSLRASMTS). Position 341 is an asymmetric dimethylarginine; alternate (arginine 341). An Omega-N-methylarginine; alternate modification is found at arginine 341. 3 stretches are compositionally biased toward pro residues: residues 347-360 (TPPP…PPPA), 423-437 (LPPP…PPGI), and 460-477 (STAP…PPSQ). The residue at position 489 (serine 489) is a Phosphoserine. Positions 497-514 (ARSVLLEAIRKGIQLRKV) constitute a WH2 domain.

It belongs to the SCAR/WAVE family. In terms of assembly, component of the WAVE1 complex composed of ABI2, CYFIP1 or CYFIP2, BRK1, NCKAP1 and WASF1/WAVE1. Within the complex, a heterodimer containing NCKAP1 and CYFIP1 interacts with a heterotrimer formed by WAVE1, ABI2 and BRK1. CYFIP2 binds to activated RAC1 which causes the complex to dissociate, releasing activated WASF1. The complex can also be activated by NCK1. Binds actin and the Arp2/3 complex. Interacts with BAIAP2. Interacts with SHANK3; the interaction mediates the association of SHANK3 with the WAVE1 complex. Interacts with ABI1 (via N-terminus). Interacts with SORBS2; this interaction greatly enhances phosphorylation by ABL1 and dephosphorylation by PTPN12 and might mediate partial to focal adhesion sites.

Its subcellular location is the cytoplasm. It localises to the cytoskeleton. The protein resides in the synapse. The protein localises to the cell junction. It is found in the focal adhesion. Functionally, downstream effector molecule involved in the transmission of signals from tyrosine kinase receptors and small GTPases to the actin cytoskeleton. Promotes formation of actin filaments. Part of the WAVE complex that regulates lamellipodia formation. The WAVE complex regulates actin filament reorganization via its interaction with the Arp2/3 complex. As component of the WAVE1 complex, required for BDNF-NTRK2 endocytic trafficking and signaling from early endosomes. Also involved in the regulation of mitochondrial dynamics. The sequence is that of Actin-binding protein WASF1 (WASF1) from Pongo abelii (Sumatran orangutan).